Here is a 319-residue protein sequence, read N- to C-terminus: tRNA-modifying protein YgfZ (319 aa).

Residues W27 and W189 each contribute to the folate site.

This sequence belongs to the tRNA-modifying YgfZ family.

It is found in the cytoplasm. In terms of biological role, folate-binding protein involved in regulating the level of ATP-DnaA and in the modification of some tRNAs. It is probably a key factor in regulatory networks that act via tRNA modification, such as initiation of chromosomal replication. This Buchnera aphidicola subsp. Schizaphis graminum (strain Sg) protein is tRNA-modifying protein YgfZ.